We begin with the raw amino-acid sequence, 416 residues long: Queuine tRNA-ribosyltransferase accessory subunit 2 (416 aa).

Residues Cys-323, Cys-325, Cys-328, and His-354 each contribute to the Zn(2+) site.

The protein belongs to the queuine tRNA-ribosyltransferase family. QTRT2 subfamily. In terms of assembly, heterodimer of a catalytic subunit and an accessory subunit. Zn(2+) serves as cofactor.

Its subcellular location is the cytoplasm. Its function is as follows. Non-catalytic subunit of the queuine tRNA-ribosyltransferase (TGT) that catalyzes the base-exchange of a guanine (G) residue with queuine (Q) at position 34 (anticodon wobble position) in tRNAs with GU(N) anticodons (tRNA-Asp, -Asn, -His and -Tyr), resulting in the hypermodified nucleoside queuosine (7-(((4,5-cis-dihydroxy-2-cyclopenten-1-yl)amino)methyl)-7-deazaguanosine). This Drosophila mojavensis (Fruit fly) protein is Queuine tRNA-ribosyltransferase accessory subunit 2.